Reading from the N-terminus, the 76-residue chain is Acyl carrier protein (76 aa).

One can recognise a Carrier domain in the interval 1-76 (MSVEEKVKKI…DAIDYVSNKQ (76 aa)). Ser-36 bears the O-(pantetheine 4'-phosphoryl)serine mark.

It belongs to the acyl carrier protein (ACP) family. In terms of processing, 4'-phosphopantetheine is transferred from CoA to a specific serine of apo-ACP by AcpS. This modification is essential for activity because fatty acids are bound in thioester linkage to the sulfhydryl of the prosthetic group.

The protein localises to the cytoplasm. It participates in lipid metabolism; fatty acid biosynthesis. In terms of biological role, carrier of the growing fatty acid chain in fatty acid biosynthesis. This is Acyl carrier protein from Nitratidesulfovibrio vulgaris (strain ATCC 29579 / DSM 644 / CCUG 34227 / NCIMB 8303 / VKM B-1760 / Hildenborough) (Desulfovibrio vulgaris).